Reading from the N-terminus, the 92-residue chain is Sugar fermentation stimulation protein B (92 aa).

A DNA-binding region (H-T-H motif) is located at residues 50–69; sequence EMIIAKALGTDPWVIWPSRY.

The protein belongs to the ner transcriptional regulatory family.

Functionally, this protein is involved in positive regulation of the metabolism of sugars. This is Sugar fermentation stimulation protein B (sfsB) from Escherichia coli O157:H7.